A 547-amino-acid chain; its full sequence is Chaperonin GroEL (547 aa).

ATP contacts are provided by residues 30-33, Lys-51, 87-91, Gly-415, 479-481, and Asp-495; these read TLGP, DGTTT, and NAA.

The protein belongs to the chaperonin (HSP60) family. In terms of assembly, forms a cylinder of 14 subunits composed of two heptameric rings stacked back-to-back. Interacts with the co-chaperonin GroES.

Its subcellular location is the cytoplasm. It carries out the reaction ATP + H2O + a folded polypeptide = ADP + phosphate + an unfolded polypeptide.. In terms of biological role, together with its co-chaperonin GroES, plays an essential role in assisting protein folding. The GroEL-GroES system forms a nano-cage that allows encapsulation of the non-native substrate proteins and provides a physical environment optimized to promote and accelerate protein folding. The polypeptide is Chaperonin GroEL (Pseudomonas paraeruginosa (strain DSM 24068 / PA7) (Pseudomonas aeruginosa (strain PA7))).